The chain runs to 260 residues: Exosome complex component Rrp42 (260 aa).

Belongs to the RNase PH family. Rrp42 subfamily. Component of the archaeal exosome complex. Forms a hexameric ring-like arrangement composed of 3 Rrp41-Rrp42 heterodimers. The hexameric ring associates with a trimer of Rrp4 and/or Csl4 subunits.

Its subcellular location is the cytoplasm. Non-catalytic component of the exosome, which is a complex involved in RNA degradation. Contributes to the structuring of the Rrp41 active site. The chain is Exosome complex component Rrp42 from Methanocella arvoryzae (strain DSM 22066 / NBRC 105507 / MRE50).